Reading from the N-terminus, the 475-residue chain is Ribulose bisphosphate carboxylase large chain (475 aa).

The propeptide occupies 1–2; the sequence is MV. The residue at position 3 (proline 3) is an N-acetylproline. At lysine 14 the chain carries N6,N6,N6-trimethyllysine. Residues asparagine 123 and threonine 173 each contribute to the substrate site. Lysine 175 (proton acceptor) is an active-site residue. Lysine 177 contacts substrate. The Mg(2+) site is built by lysine 201, aspartate 203, and glutamate 204. Lysine 201 carries the post-translational modification N6-carboxylysine. Residue histidine 294 is the Proton acceptor of the active site. 3 residues coordinate substrate: arginine 295, histidine 327, and serine 379.

This sequence belongs to the RuBisCO large chain family. Type I subfamily. In terms of assembly, heterohexadecamer of 8 large chains and 8 small chains. Mg(2+) serves as cofactor.

The protein localises to the plastid. Its subcellular location is the chloroplast. The enzyme catalyses 2 (2R)-3-phosphoglycerate + 2 H(+) = D-ribulose 1,5-bisphosphate + CO2 + H2O. The catalysed reaction is D-ribulose 1,5-bisphosphate + O2 = 2-phosphoglycolate + (2R)-3-phosphoglycerate + 2 H(+). Its function is as follows. RuBisCO catalyzes two reactions: the carboxylation of D-ribulose 1,5-bisphosphate, the primary event in carbon dioxide fixation, as well as the oxidative fragmentation of the pentose substrate in the photorespiration process. Both reactions occur simultaneously and in competition at the same active site. In Chlamydomonas moewusii (Chlamydomonas eugametos), this protein is Ribulose bisphosphate carboxylase large chain.